The chain runs to 1063 residues: Structural polyprotein (1063 aa).

A disordered region spans residues 1–131; the sequence is MASTTPITME…LGPPTNPFQA (131 aa). Residues 30 to 69 are human C1QBP/SF2P32-binding; the sequence is GASQSRRPRPPRQRDSSTTGDDSGRDSGGPRRRRGNRGRG. Position 46 is a phosphoserine; by host (Ser-46). A compositionally biased stretch (basic residues) spans 59–69; that stretch reads PRRRRGNRGRG. Residues 70 to 87 are compositionally biased toward basic and acidic residues; sequence QRRDWSRAPPPPEERQET. Residues 93–107 are compositionally biased toward pro residues; sequence APKPSRAPPQQPQPP. Cys-153 and Cys-197 form a disulfide bridge. The interval 279-300 is functions as E2 signal peptide; the sequence is GAPQAFLAGLLLAAVAVGTARA. The Extracellular portion of the chain corresponds to 301–534; sequence GLQPRADMAA…LWLATANALS (234 aa). N-linked (GlcNAc...) asparagine; by host glycosylation is found at Asn-353, Asn-371, Asn-410, and Asn-429. The chain crosses the membrane as a helical span at residues 535-555; the sequence is LDHALAAFVLLVPWVLIFMVC. Topologically, residues 556 to 582 are cytoplasmic; sequence RRTCRRRGAAAALTAVVLQGYNPPAYG. The tract at residues 563–582 is functions as E1 signal peptide; that stretch reads GAAAALTAVVLQGYNPPAYG. At 583–1028 the chain is on the extracellular side; it reads EEAFTYLCTA…QTWAEWAAAH (446 aa). Intrachain disulfides connect Cys-590/Cys-595, Cys-619/Cys-824, Cys-641/Cys-653, Cys-699/Cys-712, Cys-758/Cys-767, Cys-807/Cys-817, Cys-931/Cys-934, and Cys-950/Cys-983. Residue Asn-658 is glycosylated (N-linked (GlcNAc...) asparagine; by host). Positions 670 and 671 each coordinate Ca(2+). Ca(2+) is bound by residues Asp-718 and Thr-719. N-linked (GlcNAc...) asparagine; by host glycosylation is found at Asn-759 and Asn-791. O-linked (GalNAc...) threonine; by host glycosylation is found at Thr-1011 and Thr-1012. Residues 1029–1049 form a helical membrane-spanning segment; the sequence is WWQLTLGAICALLLAGLLACC. Over 1050–1063 the chain is Extracellular; sequence AKCLYYLRGAIAPR.

Homodimer; further assembles into homooligomer. Interacts with human C1QBP. Interacts (via N-terminus) with protease/methyltransferase p150. As to quaternary structure, heterodimer with spike glycoprotein E2. In terms of assembly, heterodimer with spike glycoprotein E1. Post-translationally, structural polyprotein: Specific enzymatic cleavages in vivo yield mature proteins. Two signal peptidase-mediated cleavages within the polyprotein produce the structural proteins capsid, E2, and E1. The E2 signal peptide remains attached to the C-terminus of the capsid protein after cleavage by the signal peptidase. Another signal peptide at E2 C-terminus directs E1 to the ER, with a similar mechanism. In terms of processing, contains three N-linked oligosaccharides. Capsid is phosphorylated on Ser-46 by host. This phosphorylation negatively regulates capsid protein RNA-binding activity. Dephosphorylated by human PP1A.

Its subcellular location is the virion. It is found in the host cytoplasm. The protein localises to the host mitochondrion. The protein resides in the virion membrane. It localises to the host Golgi apparatus membrane. In terms of biological role, capsid protein interacts with genomic RNA and assembles into icosahedric core particles 65-70 nm in diameter. The resulting nucleocapsid eventually associates with the cytoplasmic domain of E2 at the cell membrane, leading to budding and formation of mature virions from host Golgi membranes. Phosphorylation negatively regulates RNA-binding activity, possibly delaying virion assembly during the viral replication phase. Capsid protein dimerizes and becomes disulfide-linked in the virion. Modulates genomic RNA replication. Modulates subgenomic RNA synthesis by interacting with human C1QBP/SF2P32. Induces both perinuclear clustering of mitochondria and the formation of electron-dense intermitochondrial plaques, both hallmarks of rubella virus infected cells. Induces apoptosis when expressed in transfected cells. Its function is as follows. Responsible for viral attachment to target host cell, by binding to the cell receptor. Its transport to the plasma membrane depends on interaction with E1 protein. The surface glycoproteins display an irregular helical organization and a pseudo-tetrameric inner nucleocapsid arrangement. Functionally, class II viral fusion protein. Fusion activity is inactive as long as E1 is bound to E2 in mature virion. After virus attachment to target cell and clathrin-mediated endocytosis, acidification of the endosome would induce dissociation of E1/E2 heterodimer and concomitant trimerization of the E1 subunits. This E1 homotrimer is fusion active, and promotes release of viral nucleocapsid in cytoplasm after endosome and viral membrane fusion. The cytoplasmic tail of spike glycoprotein E1 modulates virus release. The surface glycoproteins display an irregular helical organization and a pseudo-tetrameric inner nucleocapsid arrangement. This Homo sapiens (Human) protein is Structural polyprotein.